Consider the following 83-residue polypeptide: Kunitz-type serine protease inhibitor 87 (83 aa).

The first 24 residues, 1-24 (MSSGGLLLLLGLLTLWAELTPVSS), serve as a signal peptide directing secretion. The BPTI/Kunitz inhibitor domain maps to 31–81 (CHLPHETGPCKAKIQAFYYNPIYDTCLKFIYGGCEGNANNFKTMDECKRTC). 3 disulfides stabilise this stretch: C31-C81, C40-C64, and C56-C77.

The protein belongs to the venom Kunitz-type family. Expressed by the venom gland.

It localises to the secreted. Its function is as follows. Serine protease inhibitor. This chain is Kunitz-type serine protease inhibitor 87, found in Drysdalia coronoides (White-lipped snake).